A 415-amino-acid chain; its full sequence is MNLNDTFAAVQAAGRHLALLPDDRINQILNAVAEAALEQTSYILSENRKDLERMSPDNPKYDRLRLTEERLRGIASDIRNVATLPSPLGRILKESIRPNGMRLTKISVPFGVIGIIYEARPNVSFDVFSLCLKSGNACILKGGSDADYSNRAIVEVIHQVLRQFNIDTHMVELLPADREATRELLHATGYVDLIIPRGSSALINFVRQNATIPVIETGAGICHTYFDEYGDTAKGAAIIHNAKTRRVSVCNALDCVIVHESRLSDLPLLCEKLKADKVIIYADPSAYQALEGHYPAGLLKPATPESFGTEFLDYKMAIKTVNSFENALGHIQEYSSRHSESIVTENPERAALFTRMVDAACVYTNVSTAFTDGAQFGLGAEIGISTQKLHARGPMGLEEITSYKWIIEGDGQTRQ.

Belongs to the gamma-glutamyl phosphate reductase family.

The protein resides in the cytoplasm. It carries out the reaction L-glutamate 5-semialdehyde + phosphate + NADP(+) = L-glutamyl 5-phosphate + NADPH + H(+). The protein operates within amino-acid biosynthesis; L-proline biosynthesis; L-glutamate 5-semialdehyde from L-glutamate: step 2/2. Catalyzes the NADPH-dependent reduction of L-glutamate 5-phosphate into L-glutamate 5-semialdehyde and phosphate. The product spontaneously undergoes cyclization to form 1-pyrroline-5-carboxylate. The polypeptide is Gamma-glutamyl phosphate reductase (Bacteroides fragilis (strain YCH46)).